Here is a 303-residue protein sequence, read N- to C-terminus: Probable cell division protein WhiA (303 aa).

The H-T-H motif DNA-binding region spans 272–303 (SIQQVADALEFPITKSGVNHRLRKINKIADDL).

This sequence belongs to the WhiA family.

Its function is as follows. Involved in cell division and chromosome segregation. This is Probable cell division protein WhiA from Streptococcus pyogenes serotype M12 (strain MGAS2096).